The sequence spans 196 residues: Holliday junction branch migration complex subunit RuvA (196 aa).

The tract at residues 1 to 63 is domain I; that stretch reads MYDYIKGKLS…DDAHLLFGFH (63 aa). Residues 64 to 142 are domain II; the sequence is TENEKEIFLN…EASGESATSR (79 aa). A flexible linker region spans residues 143–148; the sequence is KVSSEQ. The interval 148–196 is domain III; that stretch reads QNSNLEEAMEALLALGYKATELKKVKAFFEGTNETVEQYIKSSLKMLMK.

It belongs to the RuvA family. In terms of assembly, homotetramer. Forms an RuvA(8)-RuvB(12)-Holliday junction (HJ) complex. HJ DNA is sandwiched between 2 RuvA tetramers; dsDNA enters through RuvA and exits via RuvB. An RuvB hexamer assembles on each DNA strand where it exits the tetramer. Each RuvB hexamer is contacted by two RuvA subunits (via domain III) on 2 adjacent RuvB subunits; this complex drives branch migration. In the full resolvosome a probable DNA-RuvA(4)-RuvB(12)-RuvC(2) complex forms which resolves the HJ.

Its subcellular location is the cytoplasm. The RuvA-RuvB-RuvC complex processes Holliday junction (HJ) DNA during genetic recombination and DNA repair, while the RuvA-RuvB complex plays an important role in the rescue of blocked DNA replication forks via replication fork reversal (RFR). RuvA specifically binds to HJ cruciform DNA, conferring on it an open structure. The RuvB hexamer acts as an ATP-dependent pump, pulling dsDNA into and through the RuvAB complex. HJ branch migration allows RuvC to scan DNA until it finds its consensus sequence, where it cleaves and resolves the cruciform DNA. The protein is Holliday junction branch migration complex subunit RuvA of Streptococcus agalactiae serotype Ia (strain ATCC 27591 / A909 / CDC SS700).